A 429-amino-acid chain; its full sequence is Carboxypeptidase B (429 aa).

The N-terminal stretch at 1–15 (MKFLLVLALCAVVYA) is a signal peptide. The region spanning 121-423 (NYQELEVIDE…EGIVVGARRA (303 aa)) is the Peptidase M14 domain. Zn(2+) contacts are provided by H182 and E185. Substrate-binding positions include 182–185 (HARE), R236, and 256–257 (NR). C250 and C273 are oxidised to a cystine. H309 serves as a coordination point for Zn(2+). Substrate is bound by residues 310 to 311 (SF) and Y365. Residue E387 is the Proton donor/acceptor of the active site.

This sequence belongs to the peptidase M14 family. Requires Zn(2+) as cofactor.

The protein resides in the secreted. The enzyme catalyses Preferential release of a C-terminal lysine or arginine amino acid.. Highly resistant to inhibition by potato carboxypeptidase inhibitor (PCI). Moderately inhibited by leech carboxypeptidase inhibitor (LCI) and tick carboxypeptidase inhibitor (TCI). Its function is as follows. Metalloprotease which cleaves a single amino acid from the C-terminal end of polypeptide chains. Shows a strong preference for peptides with a terminal lysine residue. This is Carboxypeptidase B from Helicoverpa zea (Corn earworm moth).